The primary structure comprises 518 residues: Protein nucleotidyltransferase YdiU (518 aa).

Positions 100, 102, 103, 123, 135, 136, 193, and 200 each coordinate ATP. The active-site Proton acceptor is the D270. N271 and D280 together coordinate Mg(2+). D280 contributes to the ATP binding site.

It belongs to the SELO family. The cofactor is Mg(2+). Mn(2+) is required as a cofactor.

It carries out the reaction L-seryl-[protein] + ATP = 3-O-(5'-adenylyl)-L-seryl-[protein] + diphosphate. The catalysed reaction is L-threonyl-[protein] + ATP = 3-O-(5'-adenylyl)-L-threonyl-[protein] + diphosphate. The enzyme catalyses L-tyrosyl-[protein] + ATP = O-(5'-adenylyl)-L-tyrosyl-[protein] + diphosphate. It catalyses the reaction L-histidyl-[protein] + UTP = N(tele)-(5'-uridylyl)-L-histidyl-[protein] + diphosphate. It carries out the reaction L-seryl-[protein] + UTP = O-(5'-uridylyl)-L-seryl-[protein] + diphosphate. The catalysed reaction is L-tyrosyl-[protein] + UTP = O-(5'-uridylyl)-L-tyrosyl-[protein] + diphosphate. Nucleotidyltransferase involved in the post-translational modification of proteins. It can catalyze the addition of adenosine monophosphate (AMP) or uridine monophosphate (UMP) to a protein, resulting in modifications known as AMPylation and UMPylation. In Xanthomonas oryzae pv. oryzae (strain PXO99A), this protein is Protein nucleotidyltransferase YdiU.